A 471-amino-acid polypeptide reads, in one-letter code: 7-dehydrocholesterol reductase (471 aa).

Helical transmembrane passes span 36-56 (LVSV…FIMA), 95-115 (LYAL…DFCH), 144-164 (LQAW…LSWF), 173-193 (WIPL…FAMI), 233-253 (LFFN…SFAA), 262-282 (VTNS…DFFW), 302-322 (LGWG…LYLV), and 327-347 (QLST…YYIF). NADP(+)-binding positions include Lys-354, Arg-358, Leu-391, Trp-396, and 403 to 404 (NY). Residues 416–436 (LACGGGHLLPYFYIIYMTILL) form a helical membrane-spanning segment. NADP(+) contacts are provided by residues Asp-443, 447 to 451 (CANKY), and Tyr-458.

The protein belongs to the ERG4/ERG24 family. Interacts with DHCR24; this interaction regulates DHCR7 activity. Interacts with TMEM147. Highest expression is detected in liver, followed by kidney and brain.

It is found in the endoplasmic reticulum membrane. It catalyses the reaction cholesterol + NADP(+) = 7-dehydrocholesterol + NADPH + H(+). It carries out the reaction 7-dehydrodesmosterol + NADPH + H(+) = desmosterol + NADP(+). The enzyme catalyses 5,6alpha-epoxy-5alpha-cholestan-3beta-ol + H2O = 5alpha-cholestane-3beta,5,6beta-triol. The catalysed reaction is 5,6beta-epoxy-5beta-cholestan-3beta-ol + H2O = 5alpha-cholestane-3beta,5,6beta-triol. It functions in the pathway steroid biosynthesis; cholesterol biosynthesis. Oxidoreductase that catalyzes the last step of the cholesterol synthesis pathway, which transforms cholesta-5,7-dien-3beta-ol (7-dehydrocholesterol,7-DHC) into cholesterol by reducing the C7-C8 double bond of its sterol core. Can also metabolize cholesta-5,7,24-trien-3beta-ol (7-dehydrodemosterol, 7-DHD) to desmosterol, which is then metabolized by the Delta(24)-sterol reductase (DHCR24) to cholesterol. Modulates ferroptosis (a form of regulated cell death driven by iron-dependent lipid peroxidation) through the metabolic breakdown of the anti-ferroptotic metabolites 7-DHC and 7-DHD which, when accumulated, divert the propagation of peroxyl radical-mediated damage from phospholipid components to its sterol core, protecting plasma and mitochondrial membranes from phospholipid autoxidation. Functionally, component of the microsomal antiestrogen binding site (AEBS), a multiproteic complex at the ER membrane that consists of an association between cholestenol Delta-isomerase/EBP and DHCR7. This complex is responsible for cholesterol-5,6-epoxide hydrolase (ChEH) activity, which consists in the hydration of cholesterol-5,6-epoxides (5,6-EC) into cholestane-3beta,5alpha,6beta-triol (CT). The precise role of each component of this complex has not been described yet. The polypeptide is 7-dehydrocholesterol reductase (Dhcr7) (Rattus norvegicus (Rat)).